The chain runs to 359 residues: Methionine import ATP-binding protein MetN (359 aa).

Residues 1 to 21 (MSTPASTPAPDGSHQRDHHPG) form a disordered region. In terms of domain architecture, ABC transporter spans 24–264 (VEFRGVTKVF…PQTTVAQRFV (241 aa)). ATP is bound at residue 61-68 (GYSGAGKS).

The protein belongs to the ABC transporter superfamily. Methionine importer (TC 3.A.1.24) family. The complex is composed of two ATP-binding proteins (MetN), two transmembrane proteins (MetI) and a solute-binding protein (MetQ).

Its subcellular location is the cell membrane. The catalysed reaction is L-methionine(out) + ATP + H2O = L-methionine(in) + ADP + phosphate + H(+). The enzyme catalyses D-methionine(out) + ATP + H2O = D-methionine(in) + ADP + phosphate + H(+). Functionally, part of the ABC transporter complex MetNIQ involved in methionine import. Responsible for energy coupling to the transport system. This Corynebacterium efficiens (strain DSM 44549 / YS-314 / AJ 12310 / JCM 11189 / NBRC 100395) protein is Methionine import ATP-binding protein MetN.